The chain runs to 189 residues: Probable spore germination lipoprotein YhcN (189 aa).

The first 20 residues, 1-20 (MFGKKQVLASVLLIPLLMTG), serve as a signal peptide directing secretion. Cys21 carries the N-palmitoyl cysteine lipid modification. A lipid anchor (S-diacylglycerol cysteine) is attached at Cys21. A disordered region spans residues 24-79 (ADQGEGRRDNNDVRNVNYRNPANDDMRNVNNRDNVDNNVNDNVNNNRVNDDNNNDR). Low complexity predominate over residues 51–70 (NVNNRDNVDNNVNDNVNNNR).

The protein localises to the forespore inner membrane. Its function is as follows. Probably contributes, directly or indirectly, to early events in germination. May play a role in spore outgrowth. The sequence is that of Probable spore germination lipoprotein YhcN (yhcN) from Bacillus subtilis (strain 168).